We begin with the raw amino-acid sequence, 676 residues long: Lon-like protease BrxL (676 aa).

This sequence belongs to the BrxL family.

Functionally, BREX systems (bacteriophage exclusion) provide immunity against bacteriophage. Part of a type 1 BREX system. This system allows phage adsorption but prevents phage DNA replication, without degradation of the phage DNA. Methylation of bacterial DNA by PglX probably guides self/non-self discrimination. When the brxA-brxB-brxC-pglX and pglZ-brxL operons are transformed into a susceptible B.subtilis strain (BEST7003) they confer resistance to bacteriophages SPbeta, SP16, Zeta, phi3T and SP02 and partial protection to phages SP01 and SP82G (these include lytic and temperate phage). They do not protect against phages phi105, rho10 or rho14. Additionally confers a very slight reduction in efficiency of plasmid transformation. This chain is Lon-like protease BrxL, found in Bacillus cereus (strain H3081.97).